The sequence spans 912 residues: Isoleucine--tRNA ligase (912 aa).

The 'HIGH' region signature appears at 57-67 (PYANGDIHLGT). Glu549 lines the L-isoleucyl-5'-AMP pocket. The 'KMSKS' region motif lies at 590–594 (KMSKS). An ATP-binding site is contributed by Lys593. Zn(2+)-binding residues include Cys880, Cys883, Cys900, and Cys903.

This sequence belongs to the class-I aminoacyl-tRNA synthetase family. IleS type 1 subfamily. In terms of assembly, monomer. Zn(2+) serves as cofactor.

It localises to the cytoplasm. The enzyme catalyses tRNA(Ile) + L-isoleucine + ATP = L-isoleucyl-tRNA(Ile) + AMP + diphosphate. Its function is as follows. Catalyzes the attachment of isoleucine to tRNA(Ile). As IleRS can inadvertently accommodate and process structurally similar amino acids such as valine, to avoid such errors it has two additional distinct tRNA(Ile)-dependent editing activities. One activity is designated as 'pretransfer' editing and involves the hydrolysis of activated Val-AMP. The other activity is designated 'posttransfer' editing and involves deacylation of mischarged Val-tRNA(Ile). The sequence is that of Isoleucine--tRNA ligase from Fervidobacterium pennivorans (strain DSM 9078 / Ven5).